The following is a 130-amino-acid chain: Small ribosomal subunit protein uS9 (130 aa).

The protein belongs to the universal ribosomal protein uS9 family.

The sequence is that of Small ribosomal subunit protein uS9 from Pectobacterium carotovorum subsp. carotovorum (strain PC1).